The chain runs to 158 residues: MKKVPLQVCVSNKQCDVPIRIQSVKKLVLCCLQCWKVSTDQVYVYFLDDEALAQLHDEVFADPSLTDTITLPIDSPESTAHPHILGEAFISPKAAIRFLQDRAEDTDLLYEEISRYVVHSLLHMLGYDDQTPEERKKMRGKENQALCMLREKHALLSD.

Positions 119, 123, and 129 each coordinate Zn(2+).

Belongs to the endoribonuclease YbeY family. Requires Zn(2+) as cofactor.

Its subcellular location is the cytoplasm. Its function is as follows. Single strand-specific metallo-endoribonuclease involved in late-stage 70S ribosome quality control and in maturation of the 3' terminus of the 16S rRNA. This Chlamydia abortus (strain DSM 27085 / S26/3) (Chlamydophila abortus) protein is Endoribonuclease YbeY.